Consider the following 116-residue polypeptide: Iron-sulfur cluster insertion protein ErpA (116 aa).

Residues Cys-44, Cys-108, and Cys-110 each coordinate iron-sulfur cluster.

It belongs to the HesB/IscA family. As to quaternary structure, homodimer. Iron-sulfur cluster serves as cofactor.

Functionally, required for insertion of 4Fe-4S clusters for at least IspG. This is Iron-sulfur cluster insertion protein ErpA from Shewanella denitrificans (strain OS217 / ATCC BAA-1090 / DSM 15013).